Consider the following 122-residue polypeptide: Large ribosomal subunit protein uL14 (122 aa).

This sequence belongs to the universal ribosomal protein uL14 family. As to quaternary structure, part of the 50S ribosomal subunit. Forms a cluster with proteins L3 and L19. In the 70S ribosome, L14 and L19 interact and together make contacts with the 16S rRNA in bridges B5 and B8.

In terms of biological role, binds to 23S rRNA. Forms part of two intersubunit bridges in the 70S ribosome. The chain is Large ribosomal subunit protein uL14 from Acidothermus cellulolyticus (strain ATCC 43068 / DSM 8971 / 11B).